We begin with the raw amino-acid sequence, 419 residues long: Creatine kinase S-type, mitochondrial (419 aa).

A mitochondrion-targeting transit peptide spans 1–39; the sequence is MASTFSKLLTGRNASLLFATLGTSALTTGYLVNRQKVCA. Residues 40–64 are cardiolipin-binding; sequence EARDQHKLFPPSADYPDLRKHNNCM. The Phosphagen kinase N-terminal domain maps to 46–132; the sequence is KLFPPSADYP…FDPVIKLRHN (87 aa). The 243-residue stretch at 159-401 folds into the Phosphagen kinase C-terminal domain; sequence YVLSSRVRTG…NYLVDCEKKL (243 aa). ATP is bound by residues 162-166 and His-225; that span reads SSRVR. A Phosphotyrosine modification is found at Tyr-255. ATP is bound by residues Arg-270, Arg-326, 354 to 359, and Asp-369; that span reads RGTGGV. Position 356 is a phosphothreonine (Thr-356).

It belongs to the ATP:guanido phosphotransferase family. Exists as an octamer composed of four CKMT2 homodimers.

Its subcellular location is the mitochondrion inner membrane. The enzyme catalyses creatine + ATP = N-phosphocreatine + ADP + H(+). Its function is as follows. Reversibly catalyzes the transfer of phosphate between ATP and various phosphogens (e.g. creatine phosphate). Creatine kinase isoenzymes play a central role in energy transduction in tissues with large, fluctuating energy demands, such as skeletal muscle, heart, brain and spermatozoa. In Oryctolagus cuniculus (Rabbit), this protein is Creatine kinase S-type, mitochondrial (CKMT2).